The primary structure comprises 352 residues: UDP-3-O-acylglucosamine N-acyltransferase (352 aa).

Catalysis depends on histidine 257, which acts as the Proton acceptor.

Belongs to the transferase hexapeptide repeat family. LpxD subfamily. Homotrimer.

The catalysed reaction is a UDP-3-O-[(3R)-3-hydroxyacyl]-alpha-D-glucosamine + a (3R)-hydroxyacyl-[ACP] = a UDP-2-N,3-O-bis[(3R)-3-hydroxyacyl]-alpha-D-glucosamine + holo-[ACP] + H(+). Its pathway is bacterial outer membrane biogenesis; LPS lipid A biosynthesis. Functionally, catalyzes the N-acylation of UDP-3-O-acylglucosamine using 3-hydroxyacyl-ACP as the acyl donor. Is involved in the biosynthesis of lipid A, a phosphorylated glycolipid that anchors the lipopolysaccharide to the outer membrane of the cell. The sequence is that of UDP-3-O-acylglucosamine N-acyltransferase from Methylobacterium sp. (strain 4-46).